A 566-amino-acid chain; its full sequence is Transcription factor tasR (566 aa).

Residues 1-30 (MISASRMEESASSSSLSDAAAPPPGAALQS) are compositionally biased toward low complexity. Positions 1 to 31 (MISASRMEESASSSSLSDAAAPPPGAALQSI) are disordered. Positions 35-68 (CDRCRFHKLKCNVPAAGHGGPVPCERCTRAKVPC) form a DNA-binding region, zn(2)-C6 fungal-type. Disordered stretches follow at residues 72 to 174 (RRRR…PGQH), 346 to 382 (EFIVTNNPQKHLGSESSSSSSSSISNSSSNNEAGGDD), 422 to 453 (SESDGCGRGASRSGPNASPALRLGELPSTGTA), and 500 to 551 (RGVG…GLGG). Low complexity-rich tracts occupy residues 89–108 (PTRRATMPSPSPTPASTSAA) and 359–378 (SESSSSSSSSISNSSSNNEA). The span at 501–532 (GVGGGGGGGGGGGGGGGGGVGGGGGGGGGPGG) shows a compositional bias: gly residues.

Its subcellular location is the nucleus. Transcription factor that regulates the expression of the gene cluster that mediates the biosynthesis of the tetramic acids Sch210971 and Sch210972, potential anti-HIV fungal natural product that contain a decalin core. This is Transcription factor tasR from Hapsidospora irregularis.